The sequence spans 329 residues: Cytoplasmic phosphatidylinositol transfer protein 1 (329 aa).

The tract at residues 267 to 329 (SHGGYSSAPS…GNKPSLAKPE (63 aa)) is disordered.

It belongs to the PtdIns transfer protein family. PI transfer class IIB subfamily.

The protein localises to the cytoplasm. The catalysed reaction is a 1,2-diacyl-sn-glycero-3-phospho-(1D-myo-inositol)(in) = a 1,2-diacyl-sn-glycero-3-phospho-(1D-myo-inositol)(out). It carries out the reaction a 1,2-diacyl-sn-glycero-3-phosphate(in) = a 1,2-diacyl-sn-glycero-3-phosphate(out). Catalyzes the transfer of phosphatidylinositol (PI) and phosphatidic acid (PA) between membranes. Binds PA derived from the phospholipase D signaling pathway and among the cellular PA species, preferably binds to the C16:0/16:1 and C16:1/18:1 PA species. The protein is Cytoplasmic phosphatidylinositol transfer protein 1 (pitpnc1) of Xenopus tropicalis (Western clawed frog).